The following is a 596-amino-acid chain: Sphingomyelinase C 1 (596 aa).

A signal peptide spans 1–36 (MITKRNIPCKKNWKYKKKSISLTLITICYMFLFLTS). The tract at residues 63–118 (KIEDSTNTDPSSNVNEEDENSINANANDNAPSDSDSSNPRSPDKNPVNPTSPNSSS) is disordered. A compositionally biased stretch (polar residues) spans 67 to 76 (STNTDPSSNV). Positions 83 to 118 (SINANANDNAPSDSDSSNPRSPDKNPVNPTSPNSSS) are enriched in low complexity.

It is found in the secreted. The catalysed reaction is a sphingomyelin + H2O = phosphocholine + an N-acylsphing-4-enine + H(+). This Leptospira interrogans serogroup Icterohaemorrhagiae serovar copenhageni (strain Fiocruz L1-130) protein is Sphingomyelinase C 1 (sph1).